The following is a 403-amino-acid chain: Cytoplasmic tRNA 2-thiolation protein 2 (403 aa).

Belongs to the CTU2/NCS2 family.

Its subcellular location is the cytoplasm. It participates in tRNA modification; 5-methoxycarbonylmethyl-2-thiouridine-tRNA biosynthesis. Functionally, plays a central role in 2-thiolation of mcm(5)S(2)U at tRNA wobble positions of tRNA(Lys), tRNA(Glu) and tRNA(Gln). May act by forming a heterodimer with NCS6/CTU1 that ligates sulfur from thiocarboxylated URM1 onto the uridine of tRNAs at wobble position. The protein is Cytoplasmic tRNA 2-thiolation protein 2 of Drosophila willistoni (Fruit fly).